Reading from the N-terminus, the 248-residue chain is 1-(5-phosphoribosyl)-5-[(5-phosphoribosylamino)methylideneamino] imidazole-4-carboxamide isomerase (248 aa).

Residue Asp-8 is the Proton acceptor of the active site. Residue Asp-129 is the Proton donor of the active site.

This sequence belongs to the HisA/HisF family.

It is found in the cytoplasm. It carries out the reaction 1-(5-phospho-beta-D-ribosyl)-5-[(5-phospho-beta-D-ribosylamino)methylideneamino]imidazole-4-carboxamide = 5-[(5-phospho-1-deoxy-D-ribulos-1-ylimino)methylamino]-1-(5-phospho-beta-D-ribosyl)imidazole-4-carboxamide. It participates in amino-acid biosynthesis; L-histidine biosynthesis; L-histidine from 5-phospho-alpha-D-ribose 1-diphosphate: step 4/9. In Rhizobium leguminosarum bv. trifolii (strain WSM2304), this protein is 1-(5-phosphoribosyl)-5-[(5-phosphoribosylamino)methylideneamino] imidazole-4-carboxamide isomerase.